The sequence spans 279 residues: Tryptophan synthase alpha chain (279 aa).

Active-site proton acceptor residues include Glu-50 and Asp-61.

The protein belongs to the TrpA family. As to quaternary structure, tetramer of two alpha and two beta chains.

The enzyme catalyses (1S,2R)-1-C-(indol-3-yl)glycerol 3-phosphate + L-serine = D-glyceraldehyde 3-phosphate + L-tryptophan + H2O. It participates in amino-acid biosynthesis; L-tryptophan biosynthesis; L-tryptophan from chorismate: step 5/5. In terms of biological role, the alpha subunit is responsible for the aldol cleavage of indoleglycerol phosphate to indole and glyceraldehyde 3-phosphate. In Brucella suis (strain ATCC 23445 / NCTC 10510), this protein is Tryptophan synthase alpha chain.